The following is a 591-amino-acid chain: Aspartate--tRNA(Asp/Asn) ligase (591 aa).

Glu174 is a binding site for L-aspartate. An aspartate region spans residues 198–201 (QLFK). Residue Arg220 coordinates L-aspartate. Residues 220-222 (RDE) and Gln229 contribute to the ATP site. Residue His450 coordinates L-aspartate. Glu483 is a binding site for ATP. L-aspartate is bound at residue Arg490. 535-538 (GLDR) lines the ATP pocket.

It belongs to the class-II aminoacyl-tRNA synthetase family. Type 1 subfamily. In terms of assembly, homodimer.

It is found in the cytoplasm. The catalysed reaction is tRNA(Asx) + L-aspartate + ATP = L-aspartyl-tRNA(Asx) + AMP + diphosphate. In terms of biological role, aspartyl-tRNA synthetase with relaxed tRNA specificity since it is able to aspartylate not only its cognate tRNA(Asp) but also tRNA(Asn). Reaction proceeds in two steps: L-aspartate is first activated by ATP to form Asp-AMP and then transferred to the acceptor end of tRNA(Asp/Asn). This chain is Aspartate--tRNA(Asp/Asn) ligase, found in Pseudomonas syringae pv. tomato (strain ATCC BAA-871 / DC3000).